Here is a 424-residue protein sequence, read N- to C-terminus: O-methyltransferase aunD (424 aa).

Asp275 is a binding site for S-adenosyl-L-methionine. His326 serves as the catalytic Proton acceptor.

The protein belongs to the class I-like SAM-binding methyltransferase superfamily. Cation-independent O-methyltransferase family.

Its pathway is secondary metabolite biosynthesis. Functionally, O-methyltransferase; part of the gene cluster that mediates the biosynthesis of aurasperone B, a dimeric gamma-naphthopyrone. The first step in the biosynthesis of aurasperone B is the production of gamma-naphthopyrone precursor YWA1 by the non-reducing polyketide synthase albA, via condensation of one acetyl-CoA starter unit with 6 malonyl-CoA units. YWA1 is then methylated by aunE at position C-6 to yield foncesin which is further methylated at position C-8 by aunD to produce fonsecin B. A key enzyme in the biosynthetic pathway is the cytochrome P450 monooxygenase aunB which catalyzes the oxidative dimerization of fonsecin B to aurasperone B. AunB also catalyzes the oxidative dimerization of rubrofusarin B into aurasperone A. The chain is O-methyltransferase aunD from Aspergillus niger (strain ATCC MYA-4892 / CBS 513.88 / FGSC A1513).